The primary structure comprises 1198 residues: Chromosome partition protein Smc (1198 aa).

Residue 40 to 47 coordinates ATP; sequence PNGSGKSN. Coiled coils occupy residues 175 to 211 and 322 to 524; these read ITKY…GQLG and LGEQ…LAKK. One can recognise an SMC hinge domain in the interval 534–647; the sequence is CGTLADLLQV…VTDMEAATRV (114 aa). Residues 687–1042 adopt a coiled-coil conformation; it reads SREIQELRQE…AELDKTMSER (356 aa). Positions 785 to 818 are disordered; that stretch reads AEEQSKLTDSIQEAQEALARQEEKNRQASREMEQ. Basic and acidic residues predominate over residues 803 to 818; the sequence is ARQEEKNRQASREMEQ.

Belongs to the SMC family. As to quaternary structure, homodimer.

The protein resides in the cytoplasm. Required for chromosome condensation and partitioning. This is Chromosome partition protein Smc from Desulfitobacterium hafniense (strain Y51).